A 299-amino-acid chain; its full sequence is Nucleophosmin (299 aa).

Residues 125-134 show a composition bias toward acidic residues; sequence ESSDDEDEEH. The interval 125 to 247 is disordered; that stretch reads ESSDDEDEEH…TPKTPLSSEE (123 aa). The Nuclear localization signal motif lies at 153–158; that stretch reads PRKKTR. The segment covering 160–187 has biased composition (acidic residues); that stretch reads EEEEEDSDEDDDDDEDDDDEDDDEEEEE. The segment covering 188-197 has biased composition (basic and acidic residues); the sequence is TPVKKTDSTK. Residues 189 to 195 carry the Nuclear localization signal motif; that stretch reads PVKKTDS. 4 consecutive repeats follow at residues 218 to 220, 221 to 223, 237 to 239, and 240 to 242; these read KTP. Positions 218–242 are 4 X 3 AA repeats of K-T-P; the sequence is KTPKTPEQKGKQDTKPQTPKTPKTP. The span at 221-231 shows a compositional bias: basic and acidic residues; the sequence is KTPEQKGKQDT. The span at 232–242 shows a compositional bias: low complexity; it reads KPQTPKTPKTP.

This sequence belongs to the nucleoplasmin family. Decamer formed by two pentameric rings associated in a head-to-head fashion. Phosphorylated.

It localises to the cytoplasm. It is found in the nucleus. The protein resides in the nucleoplasm. Its subcellular location is the nucleolus. Acts as a chaperonin for the core histones H3, H2B and H4. Associated with nucleolar ribonucleoprotein structures and bind single-stranded nucleic acids. It may function in the assembly and/or transport of ribosome. May stimulate endonuclease activity on apurinic/apyrimidinic (AP) double-stranded DNA. May inhibit endonuclease activity on AP single-stranded RNA. This Xenopus laevis (African clawed frog) protein is Nucleophosmin (npm1).